The chain runs to 384 residues: Lipid-A-disaccharide synthase 1 (384 aa).

The protein belongs to the LpxB family.

It carries out the reaction a lipid X + a UDP-2-N,3-O-bis[(3R)-3-hydroxyacyl]-alpha-D-glucosamine = a lipid A disaccharide + UDP + H(+). It participates in bacterial outer membrane biogenesis; LPS lipid A biosynthesis. Functionally, condensation of UDP-2,3-diacylglucosamine and 2,3-diacylglucosamine-1-phosphate to form lipid A disaccharide, a precursor of lipid A, a phosphorylated glycolipid that anchors the lipopolysaccharide to the outer membrane of the cell. The sequence is that of Lipid-A-disaccharide synthase 1 from Legionella pneumophila (strain Lens).